The following is a 471-amino-acid chain: Transcription initiation factor TFIID subunit 7-like (471 aa).

Disordered regions lie at residues 1–84 (MERG…RQGT), 192–211 (SPEG…TGPT), and 328–377 (EMMG…EELE). Residue serine 199 is modified to Phosphoserine. The segment covering 347-377 (GDDDDDEDEDDEDYGNEKEEEETDNSEEELE) has biased composition (acidic residues). A coiled-coil region spans residues 358–433 (EDYGNEKEEE…QKELLRKVEN (76 aa)).

The protein belongs to the TAF7 family. As to quaternary structure, TFIID is composed of TATA binding protein (TBP) and a number of TBP-associated factors (TAFs). TAF7L may replace TAF7 in a spermatogenesis-specific form of TFIID. Interacts with TBP; the interaction occurs in a sub-population of cells (pachytene and haploid round spermatids) and is developmentally regulated through differential intracellular localization of the two proteins. Interacts with TAF1. As to expression, testis-specific (at protein level). Expressed during spermatogenesis from spermatogonia stage up to the stage of round spermatids.

Its subcellular location is the nucleus. It localises to the cytoplasm. Functionally, probably functions as a spermatogenesis-specific component of the DNA-binding general transcription factor complex TFIID, a multimeric protein complex that plays a central role in mediating promoter responses to various activators and repressors. May play a role in spermatogenesis. The polypeptide is Transcription initiation factor TFIID subunit 7-like (Taf7l) (Mus musculus (Mouse)).